Here is a 291-residue protein sequence, read N- to C-terminus: ATP synthase gamma chain (291 aa).

This sequence belongs to the ATPase gamma chain family. F-type ATPases have 2 components, CF(1) - the catalytic core - and CF(0) - the membrane proton channel. CF(1) has five subunits: alpha(3), beta(3), gamma(1), delta(1), epsilon(1). CF(0) has three main subunits: a, b and c.

It is found in the cell membrane. In terms of biological role, produces ATP from ADP in the presence of a proton gradient across the membrane. The gamma chain is believed to be important in regulating ATPase activity and the flow of protons through the CF(0) complex. In Lachnoclostridium phytofermentans (strain ATCC 700394 / DSM 18823 / ISDg) (Clostridium phytofermentans), this protein is ATP synthase gamma chain.